We begin with the raw amino-acid sequence, 30 residues long: Methanobactin mb-OB3b (30 aa).

A propeptide spanning residues 1–19 (MTVKIAQKKVLPVIGRAAA) is cleaved from the precursor. The 2-(3-methylbutanoyl)-5-hydroxyoxazole-4-carbothionic acid (Leu-Cys) cross-link spans 20 to 21 (LC). The Cu(2+) site is built by Cys-21 and Cys-27. Cys-24 and Cys-29 are disulfide-bonded. The proline 5-hydroxy-oxazole-4-carbothionic acid (Pro-Cys) cross-link spans 26-27 (PC).

As to quaternary structure, monomer. In the absence of copper, may exist as a dimer or an oligomer.

The protein localises to the secreted. It is found in the cytoplasm. It carries out the reaction 2 superoxide + 2 H(+) = H2O2 + O2. Chalkophore involved in scavenging, uptake and suppression of toxicity of copper. Each apo-methanobactin (apo-mb) complexes 1 Cu(2+) or Cu(1+) ion to form Cu(1+)-mb (Cu-mb) which is then taken up by the cell. Enhances growth rate in the presence of copper and reduces growth lag upon exposition to elevated levels of copper. Cu-mb contributes to the switchover from soluble methane monooxygenase (sMMO) to the membrane-bound particulate MMO (pMMO) by inducing transcription of pMMO subunit A. It also stimulates the enzymatic activity of pMMO. In the absence of copper, binds other metal ions, like Zn(2+), Ag(1+), Au(3+), Co(2+), Cd(2+), Fe(3+), Hg(2+), Mn(2+), Ni(2+), Pb(2+) or U(6+), but not Ba(2+), Ca(2+), La(2+), Mg(2+) or Sr(2+). Uptake is an active process, which may involve TonB-dependent transporters, and as such does not involve porins. Cu-Mb can be taken up by other methanotrophic bacteria but not by E.coli. Has Cu-dependent superoxide dismutase-like activity. Shows reductant-dependent oxidase and hydrogen peroxide reductase activities. Reduces copper-levels in liver in a rat model of Wilson disease. The sequence is that of Methanobactin mb-OB3b from Methylosinus trichosporium.